A 292-amino-acid chain; its full sequence is Cytidine deaminase (292 aa).

CMP/dCMP-type deaminase domains lie at 47–167 and 186–292; these read TPLK…FGPK and DHQD…YYSL. Position 88 to 90 (88 to 90) interacts with substrate; sequence NQE. H101 serves as a coordination point for Zn(2+). E103 (proton donor) is an active-site residue. Zn(2+) is bound by residues C128 and C131.

The protein belongs to the cytidine and deoxycytidylate deaminase family. In terms of assembly, homodimer. Requires Zn(2+) as cofactor.

The enzyme catalyses cytidine + H2O + H(+) = uridine + NH4(+). It carries out the reaction 2'-deoxycytidine + H2O + H(+) = 2'-deoxyuridine + NH4(+). Its function is as follows. This enzyme scavenges exogenous and endogenous cytidine and 2'-deoxycytidine for UMP synthesis. This is Cytidine deaminase from Haemophilus influenzae (strain PittEE).